Reading from the N-terminus, the 277-residue chain is Large ribosomal subunit protein uL2 (277 aa).

A disordered region spans residues 219 to 277; it reads RPQTRGSAMNPVDHPHGGGEGKKNSGRHPVTPWGKPTKGAKTRRKKASDKLIISRRKGK. The segment covering 231–241 has biased composition (basic and acidic residues); the sequence is DHPHGGGEGKK. Over residues 256-277 the composition is skewed to basic residues; it reads KGAKTRRKKASDKLIISRRKGK.

Belongs to the universal ribosomal protein uL2 family. Part of the 50S ribosomal subunit. Forms a bridge to the 30S subunit in the 70S ribosome.

One of the primary rRNA binding proteins. Required for association of the 30S and 50S subunits to form the 70S ribosome, for tRNA binding and peptide bond formation. It has been suggested to have peptidyltransferase activity; this is somewhat controversial. Makes several contacts with the 16S rRNA in the 70S ribosome. This Campylobacter curvus (strain 525.92) protein is Large ribosomal subunit protein uL2.